We begin with the raw amino-acid sequence, 427 residues long: UPF0229 protein YeaH (427 aa).

Over residues 79-90 (NDHFVQNDRIER) the composition is skewed to basic and acidic residues. The tract at residues 79–110 (NDHFVQNDRIERPQGGGGGSGSGQGQASQDGE) is disordered. Over residues 92-102 (QGGGGGSGSGQ) the composition is skewed to gly residues.

It belongs to the UPF0229 family.

This Shigella boydii serotype 18 (strain CDC 3083-94 / BS512) protein is UPF0229 protein YeaH.